Here is a 442-residue protein sequence, read N- to C-terminus: Glutamyl-tRNA(Gln) amidotransferase subunit D (442 aa).

Residues 63–84 (TQTDIGSSAGAGADTEADKTES) form a disordered region. Residues 102–429 (PTVSLISTGG…PDPTNAMRKS (328 aa)) form the Asparaginase/glutaminase domain. Residues Thr-112, Thr-188, Asp-189, and Lys-265 contribute to the active site.

It belongs to the asparaginase 1 family. GatD subfamily. In terms of assembly, heterodimer of GatD and GatE.

The catalysed reaction is L-glutamyl-tRNA(Gln) + L-glutamine + ATP + H2O = L-glutaminyl-tRNA(Gln) + L-glutamate + ADP + phosphate + H(+). Its function is as follows. Allows the formation of correctly charged Gln-tRNA(Gln) through the transamidation of misacylated Glu-tRNA(Gln) in organisms which lack glutaminyl-tRNA synthetase. The reaction takes place in the presence of glutamine and ATP through an activated gamma-phospho-Glu-tRNA(Gln). The GatDE system is specific for glutamate and does not act on aspartate. The polypeptide is Glutamyl-tRNA(Gln) amidotransferase subunit D (Haloquadratum walsbyi (strain DSM 16790 / HBSQ001)).